The primary structure comprises 284 residues: MKVECASNIGFCFGVHRAINILEKTASERGGVETLGALVHNQQVLNRLSGMGVRVVKNIDDISGRTVAISSHGVGPAVLAELKSKGLEIVDTTCPFVKRAQVAAKRFHDAGFFTVIYGDVNHPEVKGILGWAGGNGLATLNPQGLDDIPDLSRYIGVLSQTTQIPTGFTSFVKNVIDQALVKDAEIRIADTLCHDIRDRQAAALELAGRVDLMLVIGGHNSANTRHLLDLCKTVSNTHLIETASELQTDWLKGVSRIGITSGASTDETTISEVCSYLDRLSAGA.

C12 lines the [4Fe-4S] cluster pocket. H40 and H72 together coordinate (2E)-4-hydroxy-3-methylbut-2-enyl diphosphate. H40 and H72 together coordinate dimethylallyl diphosphate. H40 and H72 together coordinate isopentenyl diphosphate. Residue C94 coordinates [4Fe-4S] cluster. Position 122 (H122) interacts with (2E)-4-hydroxy-3-methylbut-2-enyl diphosphate. Dimethylallyl diphosphate is bound at residue H122. H122 contributes to the isopentenyl diphosphate binding site. Catalysis depends on E124, which acts as the Proton donor. T161 serves as a coordination point for (2E)-4-hydroxy-3-methylbut-2-enyl diphosphate. C193 contacts [4Fe-4S] cluster. Residues S221, N223, and S264 each contribute to the (2E)-4-hydroxy-3-methylbut-2-enyl diphosphate site. Positions 221, 223, and 264 each coordinate dimethylallyl diphosphate. Residues S221, N223, and S264 each coordinate isopentenyl diphosphate.

Belongs to the IspH family. Requires [4Fe-4S] cluster as cofactor.

The enzyme catalyses isopentenyl diphosphate + 2 oxidized [2Fe-2S]-[ferredoxin] + H2O = (2E)-4-hydroxy-3-methylbut-2-enyl diphosphate + 2 reduced [2Fe-2S]-[ferredoxin] + 2 H(+). It catalyses the reaction dimethylallyl diphosphate + 2 oxidized [2Fe-2S]-[ferredoxin] + H2O = (2E)-4-hydroxy-3-methylbut-2-enyl diphosphate + 2 reduced [2Fe-2S]-[ferredoxin] + 2 H(+). It participates in isoprenoid biosynthesis; dimethylallyl diphosphate biosynthesis; dimethylallyl diphosphate from (2E)-4-hydroxy-3-methylbutenyl diphosphate: step 1/1. Its pathway is isoprenoid biosynthesis; isopentenyl diphosphate biosynthesis via DXP pathway; isopentenyl diphosphate from 1-deoxy-D-xylulose 5-phosphate: step 6/6. In terms of biological role, catalyzes the conversion of 1-hydroxy-2-methyl-2-(E)-butenyl 4-diphosphate (HMBPP) into a mixture of isopentenyl diphosphate (IPP) and dimethylallyl diphosphate (DMAPP). Acts in the terminal step of the DOXP/MEP pathway for isoprenoid precursor biosynthesis. This is 4-hydroxy-3-methylbut-2-enyl diphosphate reductase from Dehalococcoides mccartyi (strain ATCC BAA-2100 / JCM 16839 / KCTC 5957 / BAV1).